A 387-amino-acid polypeptide reads, in one-letter code: Alpha-sarcoglycan (387 aa).

The signal sequence occupies residues 1-23 (MAATLTWILLFVGLLAGLRDTKA). The Extracellular segment spans residues 24–290 (QQTTLYPLVG…ATGRDFLADA (267 aa)). 2 N-linked (GlcNAc...) asparagine glycosylation sites follow: asparagine 174 and asparagine 246. A helical transmembrane segment spans residues 291 to 311 (LVTLLVPLLVALLLTLLLAYI). The Cytoplasmic segment spans residues 312–387 (MCCRREGQLK…AQVPLILDQH (76 aa)). Phosphoserine is present on serine 377.

Belongs to the sarcoglycan alpha/epsilon family. In terms of assembly, interacts with the syntrophin SNTA1. Cross-link to form 2 major subcomplexes: one consisting of SGCB, SGCD and SGCG and the other consisting of SGCB and SGCD. The association between SGCB and SGCG is particularly strong while SGCA is loosely associated with the other sarcoglycans. As to expression, strongly expressed in skeletal and heart muscle.

It is found in the cell membrane. It localises to the sarcolemma. The protein localises to the cytoplasm. Its subcellular location is the cytoskeleton. In terms of biological role, component of the sarcoglycan complex, a subcomplex of the dystrophin-glycoprotein complex which forms a link between the F-actin cytoskeleton and the extracellular matrix. The sequence is that of Alpha-sarcoglycan (SGCA) from Mesocricetus auratus (Golden hamster).